Consider the following 431-residue polypeptide: Phosphoribosylamine--glycine ligase (431 aa).

The 208-residue stretch at 109-316 (KDFLARHGIP…LVDLLEAAID (208 aa)) folds into the ATP-grasp domain. ATP is bound at residue 135-196 (VREKGTPIVV…EEFLDGEEAS (62 aa)). The Mg(2+) site is built by glutamate 286 and asparagine 288.

Belongs to the GARS family. Mg(2+) is required as a cofactor. The cofactor is Mn(2+).

It catalyses the reaction 5-phospho-beta-D-ribosylamine + glycine + ATP = N(1)-(5-phospho-beta-D-ribosyl)glycinamide + ADP + phosphate + H(+). It participates in purine metabolism; IMP biosynthesis via de novo pathway; N(1)-(5-phospho-D-ribosyl)glycinamide from 5-phospho-alpha-D-ribose 1-diphosphate: step 2/2. The protein is Phosphoribosylamine--glycine ligase of Xanthomonas axonopodis pv. citri (strain 306).